A 63-amino-acid chain; its full sequence is Protein DsrB (63 aa).

The protein belongs to the DsrB family.

This is Protein DsrB from Yersinia pseudotuberculosis serotype O:3 (strain YPIII).